The chain runs to 145 residues: uncharacterized protein (145 aa).

The helical transmembrane segment at 4–24 (IYMLVALLISSLVLFAGCVQN) threads the bilayer.

It localises to the membrane. This is an uncharacterized protein from Methanocaldococcus jannaschii (strain ATCC 43067 / DSM 2661 / JAL-1 / JCM 10045 / NBRC 100440) (Methanococcus jannaschii).